The following is a 657-amino-acid chain: UvrABC system protein B (657 aa).

Positions Lys25–Arg182 constitute a Helicase ATP-binding domain. Position 38–45 (Gly38–Thr45) interacts with ATP. Positions Tyr91–Ile114 match the Beta-hairpin motif. Positions Gln429 to Ile595 constitute a Helicase C-terminal domain. One can recognise a UVR domain in the interval Lys621–Lys656.

This sequence belongs to the UvrB family. In terms of assembly, forms a heterotetramer with UvrA during the search for lesions. Interacts with UvrC in an incision complex.

Its subcellular location is the cytoplasm. In terms of biological role, the UvrABC repair system catalyzes the recognition and processing of DNA lesions. A damage recognition complex composed of 2 UvrA and 2 UvrB subunits scans DNA for abnormalities. Upon binding of the UvrA(2)B(2) complex to a putative damaged site, the DNA wraps around one UvrB monomer. DNA wrap is dependent on ATP binding by UvrB and probably causes local melting of the DNA helix, facilitating insertion of UvrB beta-hairpin between the DNA strands. Then UvrB probes one DNA strand for the presence of a lesion. If a lesion is found the UvrA subunits dissociate and the UvrB-DNA preincision complex is formed. This complex is subsequently bound by UvrC and the second UvrB is released. If no lesion is found, the DNA wraps around the other UvrB subunit that will check the other stand for damage. This Clostridium botulinum (strain Alaska E43 / Type E3) protein is UvrABC system protein B.